The primary structure comprises 1014 residues: Probable sucrose-phosphate synthase 5 (1014 aa).

Composition is skewed to basic and acidic residues over residues 29–41 and 49–58; these read RRLE…REAA and EGEKDGKPDT. Disordered stretches follow at residues 29–108 and 648–677; these read RRLE…SDEE and QLLR…SSEP.

This sequence belongs to the glycosyltransferase 1 family. As to quaternary structure, homodimer or homotetramer. In terms of tissue distribution, expressed in germinating seeds.

It carries out the reaction beta-D-fructose 6-phosphate + UDP-alpha-D-glucose = sucrose 6(F)-phosphate + UDP + H(+). The protein operates within glycan biosynthesis; sucrose biosynthesis; sucrose from D-fructose 6-phosphate and UDP-alpha-D-glucose: step 1/2. Activity is regulated by phosphorylation and moderated by concentration of metabolites and light. In terms of biological role, plays a role in photosynthetic sucrose synthesis by catalyzing the rate-limiting step of sucrose biosynthesis from UDP-glucose and fructose- 6-phosphate. Involved in the regulation of carbon partitioning in the leaves of plants. May regulate the synthesis of sucrose and therefore play a major role as a limiting factor in the export of photoassimilates out of the leaf. Plays a role for sucrose availability that is essential for plant growth and fiber elongation. The chain is Probable sucrose-phosphate synthase 5 (SPS5) from Oryza sativa subsp. japonica (Rice).